The following is a 573-amino-acid chain: DNA ligase (573 aa).

E248 contributes to the ATP binding site. The active-site N6-AMP-lysine intermediate is the K250. ATP contacts are provided by R255, R270, E299, F340, R432, and K438.

The protein belongs to the ATP-dependent DNA ligase family. The cofactor is Mg(2+).

It catalyses the reaction ATP + (deoxyribonucleotide)n-3'-hydroxyl + 5'-phospho-(deoxyribonucleotide)m = (deoxyribonucleotide)n+m + AMP + diphosphate.. DNA ligase that seals nicks in double-stranded DNA during DNA replication, DNA recombination and DNA repair. This is DNA ligase from Methanocaldococcus jannaschii (strain ATCC 43067 / DSM 2661 / JAL-1 / JCM 10045 / NBRC 100440) (Methanococcus jannaschii).